The chain runs to 164 residues: PTS system sorbose-specific EIIB component (164 aa).

The region spanning 1-164 (MQITLARIDD…DKINETAFCE (164 aa)) is the PTS EIIB type-4 domain. His-14 (pros-phosphohistidine intermediate) is an active-site residue. His-14 bears the Phosphohistidine; by EIIA mark.

In terms of assembly, dimer of dimers.

The protein localises to the cytoplasm. It carries out the reaction keto-L-sorbose(out) + N(pros)-phospho-L-histidyl-[protein] = L-sorbose 1-phosphate(in) + L-histidyl-[protein]. Its function is as follows. The phosphoenolpyruvate-dependent sugar phosphotransferase system (PTS), a major carbohydrate active transport system, catalyzes the phosphorylation of incoming sugar substrates concomitant with their translocation across the cell membrane. The enzyme II SorABFM PTS system is involved in L-sorbose transport. This Klebsiella pneumoniae protein is PTS system sorbose-specific EIIB component.